We begin with the raw amino-acid sequence, 324 residues long: Probable UDP-sugar transporter protein SLC35A4 (324 aa).

The Cytoplasmic segment spans residues 1-18 (MSVEDGGMPGLARPKQAR). A helical membrane pass occupies residues 19–39 (WTLMLFLSTAMYGAHAPFLAL). The Lumenal portion of the chain corresponds to 40-52 (CHVDGRVPFRPSS). Residues 53–73 (AVLLTELTKLLLCAFSLLVGW) form a helical membrane-spanning segment. Residues 74–85 (QTWPQGTPPWRQ) lie on the Cytoplasmic side of the membrane. A helical transmembrane segment spans residues 86-106 (AAPFALSALLYGANNNLVIYL). At 107–142 (QRYMDPSTYQVLSNLKIGSTALLYCLCLGHRLSARQ) the chain is on the lumenal side. Residues 143–163 (GLALLLLMAAGACYASGGFQE) form a helical membrane-spanning segment. The Cytoplasmic segment spans residues 164–180 (PGNTLPGPRSAAGARPM). Residues 181-201 (PLHITPLGLLLLILYCLISGL) form a helical membrane-spanning segment. Topologically, residues 202–214 (SSVYTELIMKRQR) are lumenal. The chain crosses the membrane as a helical span at residues 215–235 (LPLALQNLFLYTFGVILNLGL). Residues 236–248 (YAGSGPGPGFLEG) lie on the Cytoplasmic side of the membrane. The helical transmembrane segment at 249 to 271 (FSGWAVLVVLNQAVNGLLMSAVM) threads the bilayer. Topologically, residues 272–279 (KHGSSITR) are lumenal. A helical membrane pass occupies residues 280–300 (LFIVSCSLVVNAVLSAVLLQL). At 301–324 (QLTATFFLAALLIGLAVCLYYGSP) the chain is on the cytoplasmic side.

Belongs to the nucleotide-sugar transporter family. SLC35A subfamily. In terms of assembly, found in a complex with SLC35A2 and SLC35A3. In terms of tissue distribution, expressed in the kidney, lung, testis, and prostate. Expressed in the brain by sets of neurons, such as the pyramidal cells of the cortex, the Purkinje cells of the cerebellum, and the motoneurons of the brainstem.

Its subcellular location is the golgi apparatus membrane. It carries out the reaction CDP-L-ribitol(in) + CDP(out) = CDP-L-ribitol(out) + CDP(in). In terms of biological role, mediates the transport of CDP-ribitol. Does not exhibit CMP-sialic acid, UDP-galactose and UDP-N-acetylglucosamine transport activity. This chain is Probable UDP-sugar transporter protein SLC35A4, found in Rattus norvegicus (Rat).